A 453-amino-acid chain; its full sequence is Secreted triacylglycerol lipase LIP2 (453 aa).

A signal peptide spans Met1–Ala19. Residue Asn98 is glycosylated (N-linked (GlcNAc...) asparagine). An intrachain disulfide couples Cys115 to Cys284. The active-site Nucleophile is the Ser197. A glycan (N-linked (GlcNAc...) asparagine) is linked at Asn230. Active-site residues include Asp344 and His378. A disulfide bridge connects residues Cys360 and Cys406.

It belongs to the AB hydrolase superfamily. Lipase family. Class Lip subfamily.

It is found in the secreted. The catalysed reaction is a triacylglycerol + H2O = a diacylglycerol + a fatty acid + H(+). It catalyses the reaction a monoacylglycerol + H2O = glycerol + a fatty acid + H(+). The enzyme catalyses a diacylglycerol + H2O = a monoacylglycerol + a fatty acid + H(+). With respect to regulation, the activity is significantly increased in the presence of Triton X-100 and partially inhibited by PMSF but unaffected by univalent and divalent metal ions. Activity is significantly decreased in acetate buffer compared to that in citrate buffer at the same pH. Its function is as follows. Major secreted lipase involved in Dandruff and seborrheic dermatitis (D/SD) probably via lipase-mediated breakdown of sebaceous lipids and release of irritating free fatty acids. Has triacylglycerol lipase activity and is able to hydrolyze triolein, tristearin, trilinolein, tripalmitoylglycerol and trihexadecenoin. Hydrolyze diacylglycerols such as distearin, dilinolein, dipalmitoylglycerol and dipalmitolein. Shows high esterase activity against 4-nitrophenyl palmitate and 1-naphthyl palmitate but not 1-naphthyl acetate, suggesting that it specifically recognizes fatty acids. Mostly converts monoolein to di- and triolein, while free fatty acids are only produced in low amounts. In Malassezia globosa (strain ATCC MYA-4612 / CBS 7966) (Dandruff-associated fungus), this protein is Secreted triacylglycerol lipase LIP2.